A 325-amino-acid chain; its full sequence is Probable 2-ketogluconate reductase (325 aa).

NAD(+)-binding positions include 158–159 (RI), Thr211, 238–240 (ISR), and Asp264. Arg240 is a catalytic residue. Glu269 is a catalytic residue. The active-site Proton donor is the His288. 288–291 (HIGS) lines the NAD(+) pocket.

Belongs to the D-isomer specific 2-hydroxyacid dehydrogenase family.

It carries out the reaction D-gluconate + NADP(+) = 2-dehydro-D-gluconate + NADPH + H(+). This chain is Probable 2-ketogluconate reductase (yvcT), found in Bacillus subtilis (strain 168).